Here is a 376-residue protein sequence, read N- to C-terminus: Zinc transporter 7 (376 aa).

Topologically, residues 1–37 are cytoplasmic; sequence MLPLSIKDDEYKPPKFNLFRKISGWFRSILSDKTSRN. The helical transmembrane segment at 38–58 threads the bilayer; it reads LFFFLCLNLSFAFVELLYGIW. The Lumenal segment spans residues 59 to 67; that stretch reads SNCLGLISD. A helical transmembrane segment spans residues 68 to 88; it reads SFHMFFDSTAILAGLAASVIS. Over 89-102 the chain is Cytoplasmic; that stretch reads KWRDNDAFSYGYVR. Residues 103-123 traverse the membrane as a helical segment; that stretch reads AEVLAGFVNGLFLIFTAFFIF. Over 124–140 the chain is Lumenal; sequence SEGVERALAPPDVHHER. Residues 141-161 traverse the membrane as a helical segment; sequence LLLVSILGFVVNLVGIFVFKH. Residues 161-218 are his-rich loop; that stretch reads HGGHGHSHGSGHGHSHSLFNGALDQTHGHGDHCHSHELKHGAAHSHDHAHGHGHFHSH. Residues 162–236 are Cytoplasmic-facing; that stretch reads GGHGHSHGSG…TGPSRQILQG (75 aa). Residues 188–222 are compositionally biased toward basic and acidic residues; the sequence is GHGDHCHSHELKHGAAHSHDHAHGHGHFHSHDGPS. A disordered region spans residues 188-226; sequence GHGDHCHSHELKHGAAHSHDHAHGHGHFHSHDGPSLKET. A helical transmembrane segment spans residues 237-257; that stretch reads VFLHILADTLGSIGVIASAIM. Residues 258-262 lie on the Lumenal side of the membrane; that stretch reads MQNFG. A helical transmembrane segment spans residues 263-283; sequence LMIADPICSILIAMLIVISVI. Topologically, residues 284–376 are cytoplasmic; it reads PLLRESVGIL…LYVQIDFAAM (93 aa).

Belongs to the cation diffusion facilitator (CDF) transporter (TC 2.A.4) family. SLC30A subfamily. Homooligomer.

It is found in the golgi apparatus membrane. It localises to the cytoplasmic vesicle. The protein resides in the golgi apparatus. The protein localises to the trans-Golgi network. Its subcellular location is the sarcoplasmic reticulum. It is found in the mitochondrion. It carries out the reaction Zn(2+)(in) = Zn(2+)(out). Zinc ion transporter mediating zinc entry from the cytosol into the lumen of organelles along the secretory pathway. By contributing to zinc ion homeostasis within the early secretory pathway, regulates the activation and folding of enzymes like alkaline phosphatases. This Bos taurus (Bovine) protein is Zinc transporter 7 (SLC30A7).